The chain runs to 304 residues: D-alanine--D-alanine ligase (304 aa).

Residues 100 to 301 form the ATP-grasp domain; it reads KLVALQSGIP…FGEFLEDLIK (202 aa). 129 to 184 is a binding site for ATP; it reads ERKLGSPFIVKPCDVGSTIGLSLVRSASEYEVALEEAFRFSDRLLLEEFIDGFEVT. 3 residues coordinate Mg(2+): Asp-256, Glu-268, and Asn-270.

Belongs to the D-alanine--D-alanine ligase family. Mg(2+) is required as a cofactor. Mn(2+) serves as cofactor.

It localises to the cytoplasm. The enzyme catalyses 2 D-alanine + ATP = D-alanyl-D-alanine + ADP + phosphate + H(+). The protein operates within cell wall biogenesis; peptidoglycan biosynthesis. Its function is as follows. Cell wall formation. The protein is D-alanine--D-alanine ligase of Coprothermobacter proteolyticus (strain ATCC 35245 / DSM 5265 / OCM 4 / BT).